The primary structure comprises 259 residues: Probable metal transport system ATP-binding protein CPn_0348/CP_0412/CPj0348/CpB0355 (259 aa).

Positions 3 to 241 (VKDETFWSVH…TIFQTYGCEI (239 aa)) constitute an ABC transporter domain. 41 to 48 (GPNGAGKS) is an ATP binding site.

This sequence belongs to the ABC transporter superfamily.

It is found in the cell inner membrane. Its function is as follows. Part of an ATP-driven transport system CPn0346/CPn0347/CPn0348/CPn0349 for a metal. Probably responsible for energy coupling to the transport system. In Chlamydia pneumoniae (Chlamydophila pneumoniae), this protein is Probable metal transport system ATP-binding protein CPn_0348/CP_0412/CPj0348/CpB0355.